A 153-amino-acid polypeptide reads, in one-letter code: Transcriptional repressor NrdR (153 aa).

A zinc finger lies at 3-34 (CPSCQHHGTRVLDSRPVDEGRSIRRRRECEQC). The 91-residue stretch at 49–139 (LIVVKKQGMR…VYRQFKDLNV (91 aa)) folds into the ATP-cone domain.

This sequence belongs to the NrdR family. Zn(2+) is required as a cofactor.

Functionally, negatively regulates transcription of bacterial ribonucleotide reductase nrd genes and operons by binding to NrdR-boxes. The polypeptide is Transcriptional repressor NrdR (Geobacillus sp. (strain WCH70)).